The following is a 219-amino-acid chain: Probable GTP-binding protein EngB (219 aa).

The 184-residue stretch at valine 24–proline 207 folds into the EngB-type G domain. Residues glycine 32–serine 39, glycine 59–histidine 63, aspartate 81–glycine 84, threonine 148–aspartate 151, and phenylalanine 186–alanine 188 contribute to the GTP site. Residues serine 39 and threonine 61 each coordinate Mg(2+).

It belongs to the TRAFAC class TrmE-Era-EngA-EngB-Septin-like GTPase superfamily. EngB GTPase family. Mg(2+) serves as cofactor.

Its function is as follows. Necessary for normal cell division and for the maintenance of normal septation. The sequence is that of Probable GTP-binding protein EngB from Burkholderia vietnamiensis (strain G4 / LMG 22486) (Burkholderia cepacia (strain R1808)).